A 643-amino-acid chain; its full sequence is Zinc finger protein 23 (643 aa).

One can recognise a KRAB domain in the interval 1 to 43 (MLENYGNVASLGFPLLKPAVISQLEGGSELGGSSPLAAGTGLQ). A Glycyl lysine isopeptide (Lys-Gly) (interchain with G-Cter in SUMO2) cross-link involves residue lysine 157. The C2H2-type 1; degenerate zinc-finger motif lies at 168-190 (FKCEELVEPFRCDSQLIQHQENN). C2H2-type zinc fingers lie at residues 196–218 (YQCSECGKAFSINEKLIWHQRLH), 224–246 (FKCVECGKSFSYSSHYITHQTIH), 252–274 (YQCKMCGKAFSVNGSLSRHQRIH), 280–302 (YQCKECGNGFSCSSAYITHQRVH), 308–330 (YECNDCGKAFNVNAKLIQHQRIH), 336–358 (YECNECGKGFRCSSQLRQHQSIH), 364–386 (YQCKECGKGFNNNTKLIQHQRIH), 392–414 (YECTECGKAFSVKGKLIQHQRIH), 420–442 (YECNECGKAFRCNSQFRQHLRIH), 448–470 (YECNECGKAFSVNGKLMRHQRIH), 476–498 (FECNECGRCFTSKRNLLDHHRIH), 504–526 (YQCKECGKAFSINAKLTRHQRIH), 532–554 (FKCMECEKAFSCSSNYIVHQRIH), 560–582 (FQCKECGKAFHVNAHLIRHQRSH), 588–610 (FRCVECGKGFSFSSDYIIHQTVH), and 616–638 (YMCSVCGKAFRFSFQLSQHQSVH).

This sequence belongs to the krueppel C2H2-type zinc-finger protein family.

It localises to the nucleus. Functionally, may be involved in transcriptional regulation. May have a role in embryonic development. The polypeptide is Zinc finger protein 23 (ZNF23) (Homo sapiens (Human)).